The sequence spans 344 residues: L-threonine 3-dehydrogenase (344 aa).

Cys38 serves as a coordination point for Zn(2+). Active-site charge relay system residues include Thr40 and His43. Residues His63, Glu64, Cys93, Cys96, Cys99, and Cys107 each coordinate Zn(2+). NAD(+)-binding positions include Ile175, Asp195, Arg200, 263–265 (LGI), and 287–288 (IY).

The protein belongs to the zinc-containing alcohol dehydrogenase family. As to quaternary structure, homotetramer. Zn(2+) is required as a cofactor.

It localises to the cytoplasm. It catalyses the reaction L-threonine + NAD(+) = (2S)-2-amino-3-oxobutanoate + NADH + H(+). It functions in the pathway amino-acid degradation; L-threonine degradation via oxydo-reductase pathway; glycine from L-threonine: step 1/2. Its function is as follows. Catalyzes the NAD(+)-dependent oxidation of L-threonine to 2-amino-3-ketobutyrate. This Deinococcus deserti (strain DSM 17065 / CIP 109153 / LMG 22923 / VCD115) protein is L-threonine 3-dehydrogenase.